The primary structure comprises 457 residues: Adenylosuccinate synthetase isozyme 1 (457 aa).

The disordered stretch occupies residues 1-21 (MSGTRASNDRPPGAGGVKRGR). Residues 42-48 (GDEGKGK) and 70-72 (GHT) contribute to the GTP site. The Proton acceptor role is filled by aspartate 43. The Mg(2+) site is built by aspartate 43 and glycine 70. Residue aspartate 43 coordinates substrate. IMP is bound by residues 43-46 (DEGK), 68-71 (NAGH), threonine 163, arginine 177, asparagine 256, threonine 271, and arginine 335. Histidine 71 acts as the Proton donor in catalysis. 331–337 (VTTGRKR) is a substrate binding site. GTP-binding positions include arginine 337, 363 to 365 (KLD), and 445 to 448 (GVGK).

Belongs to the adenylosuccinate synthetase family. In terms of assembly, homodimer. Requires Mg(2+) as cofactor. In terms of tissue distribution, predominantly expressed in skeletal muscle and heart, as well as in several hematopoietic cell lines and solid tumors.

The protein resides in the cytoplasm. The catalysed reaction is IMP + L-aspartate + GTP = N(6)-(1,2-dicarboxyethyl)-AMP + GDP + phosphate + 2 H(+). Its pathway is purine metabolism; AMP biosynthesis via de novo pathway; AMP from IMP: step 1/2. Component of the purine nucleotide cycle (PNC), which interconverts IMP and AMP to regulate the nucleotide levels in various tissues, and which contributes to glycolysis and ammoniagenesis. Catalyzes the first committed step in the biosynthesis of AMP from IMP. This chain is Adenylosuccinate synthetase isozyme 1, found in Homo sapiens (Human).